The sequence spans 95 residues: Integration host factor subunit beta (95 aa).

Belongs to the bacterial histone-like protein family. In terms of assembly, heterodimer of an alpha and a beta chain.

This protein is one of the two subunits of integration host factor, a specific DNA-binding protein that functions in genetic recombination as well as in transcriptional and translational control. In Shewanella pealeana (strain ATCC 700345 / ANG-SQ1), this protein is Integration host factor subunit beta.